The sequence spans 684 residues: uncharacterized protein (684 aa).

Disordered regions lie at residues 267-353 and 388-449; these read MGAR…TCTD and SVAS…AERE. Residues 316–326 are compositionally biased toward polar residues; the sequence is GMTSAKASTSY. A compositionally biased stretch (basic and acidic residues) spans 438 to 449; sequence RPTEARRRAERE.

This is an uncharacterized protein from Colorado tick fever virus (strain USA/Florio N-7180) (CTFV).